Reading from the N-terminus, the 316-residue chain is Homoserine kinase (316 aa).

It belongs to the pseudomonas-type ThrB family.

It carries out the reaction L-homoserine + ATP = O-phospho-L-homoserine + ADP + H(+). Its pathway is amino-acid biosynthesis; L-threonine biosynthesis; L-threonine from L-aspartate: step 4/5. In Pseudomonas aeruginosa (strain LESB58), this protein is Homoserine kinase.